The chain runs to 983 residues: Seizure protein 6 homolog (983 aa).

The first 19 residues, 1–19 (MRPAALLLLPSLLALLVHG), serve as a signal peptide directing secretion. 2 disordered regions span residues 80 to 132 (GQEK…WSLE) and 148 to 194 (PGMA…QTTG). Polar residues predominate over residues 101–112 (NQDSRPVFTSPT). Residues 154–167 (TPGPGERPNTPPPS) show a composition bias toward pro residues. N-linked (GlcNAc...) asparagine glycosylation is present at Asn-278. Residues 344–403 (LSCHFPRRPAYGAVTVTSLHPGGSARFRCATGYQLKGARLLTCLNATQPFWDSQEPVCIA) enclose the Sushi 1 domain. 12 disulfides stabilise this stretch: Cys-346–Cys-386, Cys-372–Cys-401, Cys-405–Cys-432, Cys-521–Cys-563, Cys-548–Cys-578, Cys-582–Cys-608, Cys-699–Cys-741, Cys-727–Cys-754, Cys-760–Cys-802, Cys-788–Cys-819, Cys-827–Cys-869, and Cys-855–Cys-884. N-linked (GlcNAc...) asparagine glycosylation is found at Asn-388, Asn-425, and Asn-530. The CUB 1 domain occupies 405 to 516 (CGGVIRNATT…AGMALRYEAF (112 aa)). In terms of domain architecture, Sushi 2 spans 519–580 (GHCYEPFVKY…WNETEPACRA (62 aa)). Residues 582–693 (CSGETTDSAG…QGFVIHFFEV (112 aa)) form the CUB 2 domain. Sushi domains lie at 697–756 (DTCP…SCQR), 758–821 (TSCL…KCLL), and 825–886 (KPCH…ICRA). Residues 915 to 935 (LAAAIFLPLVAMALLVGGVYL) form a helical membrane-spanning segment.

It belongs to the SEZ6 family.

The protein resides in the cell membrane. Its function is as follows. May play a role in cell-cell recognition and in neuronal membrane signaling. Seems to be important for the achievement of the necessary balance between dendrite elongation and branching during the elaboration of a complex dendritic arbor. Involved in the development of appropriate excitatory synaptic connectivity. The chain is Seizure protein 6 homolog (SEZ6) from Bos taurus (Bovine).